The sequence spans 156 residues: Protein-export protein SecB (156 aa).

It belongs to the SecB family. In terms of assembly, homotetramer, a dimer of dimers. One homotetramer interacts with 1 SecA dimer.

Its subcellular location is the cytoplasm. Functionally, one of the proteins required for the normal export of preproteins out of the cell cytoplasm. It is a molecular chaperone that binds to a subset of precursor proteins, maintaining them in a translocation-competent state. It also specifically binds to its receptor SecA. This chain is Protein-export protein SecB, found in Aeromonas hydrophila subsp. hydrophila (strain ATCC 7966 / DSM 30187 / BCRC 13018 / CCUG 14551 / JCM 1027 / KCTC 2358 / NCIMB 9240 / NCTC 8049).